An 869-amino-acid polypeptide reads, in one-letter code: MRVLSAIALVASLVPSALSAPASESRVSTQLQSRDAAGYSSPPYYPAPNGGWLSSWADAYEKAQRVVRNMTLAEKVNLTTGTGIFMGPCVGQTGSALRFGIPNLCLQDSPLGVRNSDHNTAFPAGITVGATFDKDLMYARGVELGEEFRGKGINVFLGPSVGPIGRKPRGGRNWEGFGADPSLQAIGGAQTIKGIQSRGVIATIKHYIGNEQEMYRMSNIGQRAYSSNIDDRTLHELYLWPFAEGIRAGVGAVMTAYNEVNSSACSQNSKLLNEILKDELGFQGFVMTDWLGQYGGVSSALAGLDMAMPGDGAIPLLGNAYWGSELSHSILNGSVPVSRLNDMVTRIVATWYKMGQDGDFPLPNFSSNTQDATGPLYPGALFSPSGVVNQYVNVQADHNITARAIARDAITLLKNDDNILPLKRNDSLKVFGTDAGPNPDGLNSCADMGCNKGVLTMGWGSGTSRLPYLVTPQEAIANISSNAAFFITDNFPSNVAVSSGDVAVVFISADSGENYITVEGNPGDRTSAGLNAWHNGDKLVKDAAAKFSKVVVVVHTVGPILMEEWIDLPSVKAVLVAHLPGQEAGWSLTDVLFGDYSPSGHLPYTIPRAESDYPSSVGLLSQPIVQIQDTHTEGLYIDYRHFLKSSITPRYPFGHGLSYTTFSFSQPTLSVRTALDSAYPPTRPPKGPTPTYPTTIPNPSEVAWPKNFDRIWRYLYPYLDDPAGAAKNSSKTYPYPAGYTTVPKPAPRAGGAEGGNPALFDVAFAVSVTVTNTGTRPGRAVAQLYVELPDSLGETPSRQLRQFAKTKTLAPGASETLTMEFTRKDISVWDVVVQDWKAPVRGEGVKIWLGESVLDMRAVCEVGGACRVI.

Positions 1–19 are cleaved as a signal peptide; sequence MRVLSAIALVASLVPSALS. Asn69, Asn77, and Asn261 each carry an N-linked (GlcNAc...) asparagine glycan. Residue Asp289 is part of the active site. Residues Asn332, Asn364, Asn399, Asn425, and Asn478 are each glycosylated (N-linked (GlcNAc...) asparagine). A disordered region spans residues 678–698; sequence AYPPTRPPKGPTPTYPTTIPN. The segment covering 681 to 691 has biased composition (pro residues); that stretch reads PTRPPKGPTPT. A glycan (N-linked (GlcNAc...) asparagine) is linked at Asn728.

The protein belongs to the glycosyl hydrolase 3 family.

It is found in the secreted. The catalysed reaction is Hydrolysis of terminal, non-reducing beta-D-glucosyl residues with release of beta-D-glucose.. It functions in the pathway glycan metabolism; cellulose degradation. In terms of biological role, beta-glucosidases are one of a number of cellulolytic enzymes involved in the degradation of cellulosic biomass. Catalyzes the last step releasing glucose from the inhibitory cellobiose. This Neosartorya fischeri (strain ATCC 1020 / DSM 3700 / CBS 544.65 / FGSC A1164 / JCM 1740 / NRRL 181 / WB 181) (Aspergillus fischerianus) protein is Probable beta-glucosidase F (bglF).